The chain runs to 170 residues: uncharacterized protein (170 aa).

The next 3 helical transmembrane spans lie at 6–26, 31–51, and 91–111; these read PFYF…ILLI, LLFI…LIYI, and IYFS…IVAF.

The protein to M.jannaschii MJ1249.1, MJ0210.1 and MJ0785.1.

It is found in the cell membrane. This is an uncharacterized protein from Methanocaldococcus jannaschii (strain ATCC 43067 / DSM 2661 / JAL-1 / JCM 10045 / NBRC 100440) (Methanococcus jannaschii).